We begin with the raw amino-acid sequence, 148 residues long: Ponticulin-like protein D (148 aa).

Residues 1 to 20 form the signal peptide; sequence MLLNKSLLLLVAFVFAIVSA. A glycan (N-linked (GlcNAc...) asparagine) is linked at N67. D125 is lipidated: GPI-like-anchor amidated aspartate. Residues 126–148 constitute a propeptide, removed in mature form; it reads SSAAATMIASFSAILIALLFALL.

The protein belongs to the ponticulin family. In terms of processing, the GPI-like-anchor contains a phosphoceramide group, rather than a phosphatidyl group.

It localises to the cell membrane. This is Ponticulin-like protein D (ponD) from Dictyostelium discoideum (Social amoeba).